The primary structure comprises 108 residues: Protein YcgL (108 aa).

The region spanning Met-12–Leu-96 is the YcgL domain.

This is Protein YcgL from Shigella dysenteriae serotype 1 (strain Sd197).